The sequence spans 210 residues: FMN-dependent NADH:quinone oxidoreductase (210 aa).

FMN contacts are provided by residues 17-19 (SRS), 102-105 (MWNL), and 148-151 (SCGG).

It belongs to the azoreductase type 1 family. Homodimer. FMN serves as cofactor.

The catalysed reaction is 2 a quinone + NADH + H(+) = 2 a 1,4-benzosemiquinone + NAD(+). It carries out the reaction N,N-dimethyl-1,4-phenylenediamine + anthranilate + 2 NAD(+) = 2-(4-dimethylaminophenyl)diazenylbenzoate + 2 NADH + 2 H(+). Its function is as follows. Quinone reductase that provides resistance to thiol-specific stress caused by electrophilic quinones. Also exhibits azoreductase activity. Catalyzes the reductive cleavage of the azo bond in aromatic azo compounds to the corresponding amines. The polypeptide is FMN-dependent NADH:quinone oxidoreductase (Trichlorobacter lovleyi (strain ATCC BAA-1151 / DSM 17278 / SZ) (Geobacter lovleyi)).